The following is a 206-amino-acid chain: MARYLGPKLKLSRREGTDLFLKSGVRAIESKCKIDTAPGQHGARKPRLSDYGSQLREKQKVRRIYGILERQFRNYYKEANRLKGNTGENLLVLLEGRLDNVVYRMGFAATRAEARQLVSHKSIVVNGRVVNIPSYQVSVDDVIAVREKSKKQARIKASLELATQREKPTWLEVDATKMEGVFKRTPERSDLSADINEHLIVELYSK.

In terms of domain architecture, S4 RNA-binding spans 96-156; the sequence is GRLDNVVYRM…EKSKKQARIK (61 aa).

This sequence belongs to the universal ribosomal protein uS4 family. In terms of assembly, part of the 30S ribosomal subunit. Contacts protein S5. The interaction surface between S4 and S5 is involved in control of translational fidelity.

In terms of biological role, one of the primary rRNA binding proteins, it binds directly to 16S rRNA where it nucleates assembly of the body of the 30S subunit. With S5 and S12 plays an important role in translational accuracy. The chain is Small ribosomal subunit protein uS4 from Glaesserella parasuis serovar 5 (strain SH0165) (Haemophilus parasuis).